A 319-amino-acid chain; its full sequence is MamJ paralog LimJ (319 aa).

2 disordered regions span residues 1-59 (MMME…PAPV) and 145-176 (AAAP…TETE). Residues 30–52 (AALAPAADAEIPASSAPEPAAPI) show a composition bias toward low complexity. Acidic residues predominate over residues 150 to 164 (PEPEPVPEPEPEPEP).

This sequence belongs to the magnetosome MamJ protein family.

It localises to the magnetosome. Functionally, regulates the dynamic behavior of MamK filaments; paralog MamJ also promotes MamK turnover. At least one other protein besides MamJ and LimJ is required for MamK turnover. Might connect magnetosomes to MamK filaments. The protein is MamJ paralog LimJ of Paramagnetospirillum magneticum (strain ATCC 700264 / AMB-1) (Magnetospirillum magneticum).